Reading from the N-terminus, the 374-residue chain is C-X-C chemokine receptor type 5 (374 aa).

Over 1-57 the chain is Extracellular; it reads MNSPISLDMGAITYNMDDLYKELAIYSNSTEIPLQDSIFCSTEEGPLLTSFKTIFMP. Asparagine 28 carries an N-linked (GlcNAc...) asparagine glycan. Residues 58-78 traverse the membrane as a helical segment; it reads VAYSLIFLLGMMGNILVLVIL. Topologically, residues 79 to 90 are cytoplasmic; it reads ERHRHTRSSTET. The helical transmembrane segment at 91-111 threads the bilayer; the sequence is FLFHLAVADLLLVFILPFAVA. The Extracellular segment spans residues 112 to 126; sequence EGSVGWVLGTFLCKT. Cysteine 124 and cysteine 204 form a disulfide bridge. The chain crosses the membrane as a helical span at residues 127–147; sequence VIALHKINFYCSSLLLACIAV. Over 148-169 the chain is Cytoplasmic; it reads DRYLAIVHAVHAYRRRRLLSIH. The helical transmembrane segment at 170-190 threads the bilayer; the sequence is ITCSTIWLAGFLFALPELLFA. The Extracellular portion of the chain corresponds to 191–221; the sequence is KVVQPHNNESLPQCIFSQENEAETRAWFASR. N-linked (GlcNAc...) asparagine glycosylation occurs at asparagine 198. Residues 222 to 242 form a helical membrane-spanning segment; that stretch reads FLYHTGGFLLPMLVMAWCYVG. At 243 to 261 the chain is on the cytoplasmic side; the sequence is VVHRLLQAQRRPQRQKAVR. A helical membrane pass occupies residues 262–282; it reads VAILVTSIFLLCWSPYHIVIF. Over 283–306 the chain is Extracellular; that stretch reads LDTLERLKAVNSSCELSGYLSVAI. A helical transmembrane segment spans residues 307-327; it reads TLCEFLGLAHCCLNPMLYTFA. Residues 328–374 are Cytoplasmic-facing; the sequence is GVKFRSDLSRLLTKLGCAGPASLCQLFPGWRKSSLSESENATSLTTF.

Belongs to the G-protein coupled receptor 1 family. Expressed in neuronal and lymphatic tissue.

It localises to the cell membrane. Cytokine receptor that binds to B-lymphocyte chemoattractant (BLC). Involved in B-cell migration into B-cell follicles of spleen and Peyer patches but not into those of mesenteric or peripheral lymph nodes. The sequence is that of C-X-C chemokine receptor type 5 (Cxcr5) from Rattus norvegicus (Rat).